The following is a 343-amino-acid chain: F17g-G fimbrial adhesin (343 aa).

The first 22 residues, 1-22, serve as a signal peptide directing secretion; the sequence is MTNFYKVCLAVFILVCCNISHA. The segment at 23–199 is receptor-binding lectin domain; that stretch reads AVSFIGSTEN…LNPFTLNDTV (177 aa). Residues 65 to 66, 110 to 111, and 138 to 141 each bind a carbohydrate; these read AN, DT, and STQG. Cysteine 75 and cysteine 132 are oxidised to a cystine. Residues 200 to 343 are fimbrillin-binding domain; sequence TSCRLLTPSA…GISTFTFSYQ (144 aa). The tract at residues 287-307 is disordered; the sequence is LKFGPDSPVKGNENQWQLSTG. Residues 298–307 show a composition bias toward polar residues; it reads NENQWQLSTG.

This sequence belongs to the fimbrial protein family.

The protein resides in the fimbrium. Its function is as follows. Essential fimbrial adhesion factor that mediates binding to N-acetylglucosamine-containing receptors in the host intestinal microvilli, leading to colonization of the intestinal tissue, and diarrhea or septicemia. Also confers adhesiveness to laminin and basement membranes. May be involved in the initiation of polymerization of fimbrillin monomers during fimbrial filament biogenesis. In Escherichia coli, this protein is F17g-G fimbrial adhesin (f17gG).